Reading from the N-terminus, the 454-residue chain is uncharacterized protein (454 aa).

Positions 73, 79, 82, and 154 each coordinate [4Fe-4S] cluster. Residues glutamine 279, phenylalanine 307, aspartate 328, and aspartate 381 each contribute to the S-adenosyl-L-methionine site. Cysteine 408 acts as the Nucleophile in catalysis.

Belongs to the class I-like SAM-binding methyltransferase superfamily. RNA M5U methyltransferase family.

This is an uncharacterized protein from Leptospira interrogans serogroup Icterohaemorrhagiae serovar copenhageni (strain Fiocruz L1-130).